A 436-amino-acid chain; its full sequence is 3-ketoacyl-CoA thiolase (436 aa).

Cysteine 99 functions as the Acyl-thioester intermediate in the catalytic mechanism. Active-site proton acceptor residues include histidine 392 and cysteine 422.

It belongs to the thiolase-like superfamily. Thiolase family. As to quaternary structure, heterotetramer of two alpha chains (FadJ) and two beta chains (FadI).

It localises to the cytoplasm. The enzyme catalyses an acyl-CoA + acetyl-CoA = a 3-oxoacyl-CoA + CoA. It functions in the pathway lipid metabolism; fatty acid beta-oxidation. In terms of biological role, catalyzes the final step of fatty acid oxidation in which acetyl-CoA is released and the CoA ester of a fatty acid two carbons shorter is formed. This Photorhabdus laumondii subsp. laumondii (strain DSM 15139 / CIP 105565 / TT01) (Photorhabdus luminescens subsp. laumondii) protein is 3-ketoacyl-CoA thiolase.